The sequence spans 96 residues: Small ribosomal subunit protein bS6c (96 aa).

Belongs to the bacterial ribosomal protein bS6 family.

Its subcellular location is the plastid. It is found in the chloroplast. Binds together with bS18 to 16S ribosomal RNA. The polypeptide is Small ribosomal subunit protein bS6c (rps6) (Guillardia theta (Cryptophyte)).